A 365-amino-acid polypeptide reads, in one-letter code: Alpha-keto acid-binding periplasmic protein TakP (365 aa).

A signal peptide (tat-type signal) is located at residues 1-26 (MDRRSFITKAAVGGAAASALAAPALA). Substrate-binding positions include 99-100 (YY), glutamine 156, and arginine 177. Glutamine 156 contributes to the Na(+) binding site. Na(+) is bound by residues glutamate 214, tryptophan 215, and glutamate 240.

This sequence belongs to the bacterial solute-binding protein 7 family. Homodimer. The complex comprises the extracytoplasmic solute receptor protein TakP, and the two transmembrane proteins TakQ and TakM. In terms of processing, predicted to be exported by the Tat system. The position of the signal peptide cleavage has not been experimentally proven.

The protein localises to the periplasm. Its function is as follows. Part of the tripartite ATP-independent periplasmic (TRAP) transport system TakPQM involved in the uptake of alpha-keto acids. This protein specifically binds alpha-keto acids including pyruvate, oxobutyrate, oxovalerate and 4-methyl-2-oxovalerate. Ligand-binding affinity increases with the increasing chain length of the aliphatic backbone of the ligand. Is not able to bind alpha-ketoglutarate. This chain is Alpha-keto acid-binding periplasmic protein TakP, found in Cereibacter sphaeroides (strain ATCC 17023 / DSM 158 / JCM 6121 / CCUG 31486 / LMG 2827 / NBRC 12203 / NCIMB 8253 / ATH 2.4.1.) (Rhodobacter sphaeroides).